A 332-amino-acid polypeptide reads, in one-letter code: Ubiquinone biosynthesis protein COQ4, mitochondrial (332 aa).

A mitochondrion-targeting transit peptide spans 1-16 (MFTVSKKSLQASRNAF). Zn(2+) is bound by residues histidine 212, aspartate 213, histidine 216, and glutamate 228.

It belongs to the COQ4 family. As to quaternary structure, component of a multi-subunit COQ enzyme complex, composed of at least COQ3, COQ4, COQ5, COQ6, COQ7 and COQ9. The cofactor is Zn(2+).

The protein localises to the mitochondrion inner membrane. The catalysed reaction is a 4-hydroxy-3-methoxy-5-(all-trans-polyprenyl)benzoate + H(+) = a 2-methoxy-6-(all-trans-polyprenyl)phenol + CO2. Its pathway is cofactor biosynthesis; ubiquinone biosynthesis. Functionally, lyase that catalyzes the C1-decarboxylation of 4-hydroxy-3-methoxy-5-(all-trans-polyprenyl)benzoic acid into 2-methoxy-6-(all-trans-polyprenyl)phenol during ubiquinone biosynthesis. This chain is Ubiquinone biosynthesis protein COQ4, mitochondrial, found in Kluyveromyces lactis (strain ATCC 8585 / CBS 2359 / DSM 70799 / NBRC 1267 / NRRL Y-1140 / WM37) (Yeast).